The following is a 230-amino-acid chain: Aspartate and serine-rich protein (230 aa).

N-linked (GlcNAc...) asparagine glycosylation is found at N17, N132, and N139. A disordered region spans residues 112 to 230 (LNGGATAGGV…DSDSNDTDSD (119 aa)). Positions 126–140 (DTDESSNDTDEDSND) are enriched in acidic residues. Positions 141–161 (SDSKDTDSDSKDTDSDSKDSD) are enriched in basic and acidic residues. N-linked (GlcNAc...) asparagine glycans are attached at residues N163 and N170. Basic and acidic residues predominate over residues 173–223 (DSKDTDSDSKDSDSKDTDSDSKDTDSDSKDSDSKDTDSDSKDTDSDSKDSD). N-linked (GlcNAc...) asparagine glycosylation is present at N225.

As to expression, component of the acid-insoluble organic matrix of calcified layers of the shell (at protein level).

It localises to the secreted. The protein is Aspartate and serine-rich protein of Lottia gigantea (Giant owl limpet).